The sequence spans 522 residues: 2-isopropylmalate synthase (522 aa).

Residues 5 to 267 (VIIFDTTLRD…ETGINAKEIH (263 aa)) form the Pyruvate carboxyltransferase domain. 4 residues coordinate Mn(2+): Asp-14, His-202, His-204, and Asn-238. The segment at 392–522 (QLQQLVVQSD…MHKNRELGGV (131 aa)) is regulatory domain.

The protein belongs to the alpha-IPM synthase/homocitrate synthase family. LeuA type 1 subfamily. In terms of assembly, homodimer. Mn(2+) is required as a cofactor.

The protein localises to the cytoplasm. The catalysed reaction is 3-methyl-2-oxobutanoate + acetyl-CoA + H2O = (2S)-2-isopropylmalate + CoA + H(+). It participates in amino-acid biosynthesis; L-leucine biosynthesis; L-leucine from 3-methyl-2-oxobutanoate: step 1/4. Its function is as follows. Catalyzes the condensation of the acetyl group of acetyl-CoA with 3-methyl-2-oxobutanoate (2-ketoisovalerate) to form 3-carboxy-3-hydroxy-4-methylpentanoate (2-isopropylmalate). The chain is 2-isopropylmalate synthase from Shewanella sp. (strain ANA-3).